The primary structure comprises 354 residues: D-alanine--D-alanine ligase (354 aa).

The region spanning 132–342 (KMVFERAGLP…FPSLVDRLLQ (211 aa)) is the ATP-grasp domain. Residue 168–223 (EAQVGYPCFVKPANLGSSVGIAKVRNRSELEAALDNAASYDRRIIVEAGLTDIREV) participates in ATP binding. Residues D295, E309, and N311 each contribute to the Mg(2+) site.

Belongs to the D-alanine--D-alanine ligase family. Requires Mg(2+) as cofactor. It depends on Mn(2+) as a cofactor.

The protein localises to the cytoplasm. The catalysed reaction is 2 D-alanine + ATP = D-alanyl-D-alanine + ADP + phosphate + H(+). The protein operates within cell wall biogenesis; peptidoglycan biosynthesis. Its function is as follows. Cell wall formation. The chain is D-alanine--D-alanine ligase from Synechocystis sp. (strain ATCC 27184 / PCC 6803 / Kazusa).